Consider the following 495-residue polypeptide: Putative aldehyde dehydrogenase AldA (495 aa).

212-218 (GKGSESG) is an NAD(+) binding site. Catalysis depends on residues glutamate 256 and cysteine 290.

It belongs to the aldehyde dehydrogenase family.

The enzyme catalyses an aldehyde + NAD(+) + H2O = a carboxylate + NADH + 2 H(+). This chain is Putative aldehyde dehydrogenase AldA (aldA), found in Staphylococcus aureus (strain USA300).